The chain runs to 481 residues: 6-phosphogluconate dehydrogenase, decarboxylating (481 aa).

NADP(+) contacts are provided by residues 11–16, 34–36, 76–78, and N104; these read GLAVMG, NRT, and VKG. Residues N104 and 130–132 contribute to the substrate site; that span reads SGG. K184 serves as the catalytic Proton acceptor. 187–188 lines the substrate pocket; sequence HN. E191 serves as the catalytic Proton donor. Substrate contacts are provided by Y192, K259, R286, R445, and H451.

It belongs to the 6-phosphogluconate dehydrogenase family. Homodimer.

The catalysed reaction is 6-phospho-D-gluconate + NADP(+) = D-ribulose 5-phosphate + CO2 + NADPH. Its pathway is carbohydrate degradation; pentose phosphate pathway; D-ribulose 5-phosphate from D-glucose 6-phosphate (oxidative stage): step 3/3. Functionally, catalyzes the oxidative decarboxylation of 6-phosphogluconate to ribulose 5-phosphate and CO(2), with concomitant reduction of NADP to NADPH. This chain is 6-phosphogluconate dehydrogenase, decarboxylating (Pgd), found in Drosophila simulans (Fruit fly).